The chain runs to 123 residues: WAP four-disulfide core domain protein 5 (123 aa).

An N-terminal signal peptide occupies residues 1-24 (MRIQSLLLLGALLAVGSQPPAAFG). WAP domains are found at residues 27 to 73 (KGEK…CVPR) and 74 to 121 (VSVK…RDPA). Intrachain disulfides connect Cys34–Cys62, Cys41–Cys66, Cys49–Cys61, Cys55–Cys70, Cys81–Cys109, Cys88–Cys113, Cys96–Cys108, and Cys102–Cys117.

It is found in the secreted. Functionally, putative acid-stable proteinase inhibitor. This chain is WAP four-disulfide core domain protein 5 (WFDC5), found in Saimiri boliviensis boliviensis (Bolivian squirrel monkey).